A 225-amino-acid chain; its full sequence is NAD(P)H-quinone oxidoreductase subunit K, chloroplastic (225 aa).

Residues Cys43, Cys44, Cys108, and Cys139 each coordinate [4Fe-4S] cluster.

It belongs to the complex I 20 kDa subunit family. NDH is composed of at least 16 different subunits, 5 of which are encoded in the nucleus. Requires [4Fe-4S] cluster as cofactor.

It is found in the plastid. The protein localises to the chloroplast thylakoid membrane. It carries out the reaction a plastoquinone + NADH + (n+1) H(+)(in) = a plastoquinol + NAD(+) + n H(+)(out). It catalyses the reaction a plastoquinone + NADPH + (n+1) H(+)(in) = a plastoquinol + NADP(+) + n H(+)(out). Functionally, NDH shuttles electrons from NAD(P)H:plastoquinone, via FMN and iron-sulfur (Fe-S) centers, to quinones in the photosynthetic chain and possibly in a chloroplast respiratory chain. The immediate electron acceptor for the enzyme in this species is believed to be plastoquinone. Couples the redox reaction to proton translocation, and thus conserves the redox energy in a proton gradient. This is NAD(P)H-quinone oxidoreductase subunit K, chloroplastic from Lobularia maritima (Sweet alyssum).